The chain runs to 276 residues: Transmembrane protein 45B (276 aa).

6 consecutive transmembrane segments (helical) span residues 7 to 27, 48 to 68, 95 to 115, 147 to 167, 181 to 201, and 213 to 233; these read HALP…KYPL, IIEA…EQFV, LFFA…HVPL, IHSL…VEVV, LLLL…PPFG, and IMFV…ILAA. Residues S271 and S273 each carry the phosphoserine modification.

The protein belongs to the TMEM45 family.

It localises to the endosome membrane. The protein localises to the lysosome membrane. Its subcellular location is the golgi apparatus. It is found in the trans-Golgi network membrane. Functionally, plays a role in innate immunity. In Bos taurus (Bovine), this protein is Transmembrane protein 45B (TMEM45B).